The chain runs to 211 residues: Outer-membrane lipoprotein carrier protein (211 aa).

The signal sequence occupies residues 1-24 (MRNRIIVSACAALAMFAIQAPAHA).

It belongs to the LolA family. As to quaternary structure, monomer.

The protein localises to the periplasm. In terms of biological role, participates in the translocation of lipoproteins from the inner membrane to the outer membrane. Only forms a complex with a lipoprotein if the residue after the N-terminal Cys is not an aspartate (The Asp acts as a targeting signal to indicate that the lipoprotein should stay in the inner membrane). This is Outer-membrane lipoprotein carrier protein from Cupriavidus necator (strain ATCC 17699 / DSM 428 / KCTC 22496 / NCIMB 10442 / H16 / Stanier 337) (Ralstonia eutropha).